A 200-amino-acid polypeptide reads, in one-letter code: Probable molybdenum cofactor guanylyltransferase (200 aa).

GTP-binding positions include leucine 9 to glycine 11, lysine 21, aspartate 69, and aspartate 100. Aspartate 100 contacts Mg(2+).

It belongs to the MobA family. Mg(2+) is required as a cofactor.

The protein resides in the cytoplasm. The catalysed reaction is Mo-molybdopterin + GTP + H(+) = Mo-molybdopterin guanine dinucleotide + diphosphate. Its function is as follows. Transfers a GMP moiety from GTP to Mo-molybdopterin (Mo-MPT) cofactor (Moco or molybdenum cofactor) to form Mo-molybdopterin guanine dinucleotide (Mo-MGD) cofactor. This chain is Probable molybdenum cofactor guanylyltransferase, found in Bacillus cereus (strain B4264).